The sequence spans 670 residues: Auxin response factor 16 (670 aa).

The segment at residues 120 to 222 (FAKTLTQSDA…DLCVGIRRAK (103 aa)) is a DNA-binding region (TF-B3). Over residues 545-557 (KTQISSGGSNQNG) the composition is skewed to polar residues. Residues 545–579 (KTQISSGGSNQNGVAGREFSSSDEGSPCSKKVHDA) are disordered. Positions 584-664 (TGHCKVFMES…RRLTILTEQG (81 aa)) constitute a PB1 domain.

Belongs to the ARF family. In terms of assembly, homodimers and heterodimers.

The protein resides in the nucleus. Auxin response factors (ARFs) are transcriptional factors that bind specifically to the DNA sequence 5'-TGTCTC-3' found in the auxin-responsive promoter elements (AuxREs). Could act as transcriptional activator or repressor. Formation of heterodimers with Aux/IAA proteins may alter their ability to modulate early auxin response genes expression. The sequence is that of Auxin response factor 16 (ARF16) from Arabidopsis thaliana (Mouse-ear cress).